The sequence spans 506 residues: Maturase K (506 aa).

Belongs to the intron maturase 2 family. MatK subfamily.

Its subcellular location is the plastid. It is found in the chloroplast. Its function is as follows. Usually encoded in the trnK tRNA gene intron. Probably assists in splicing its own and other chloroplast group II introns. This chain is Maturase K, found in Trifolium striatum (Knotted clover).